The primary structure comprises 308 residues: Staphylococcal superantigen-like 4 (308 aa).

Positions 1 to 30 are cleaved as a signal peptide; it reads MKITTIAKTSLALGLLTTGVITTTTQAANA. The interval 28–117 is disordered; it reads ANATTPSSTK…TTKQVPTEIN (90 aa). Polar residues-rich tracts occupy residues 33 to 47 and 55 to 76; these read PSST…TPPS and SKPN…TANA. A compositionally biased stretch (low complexity) spans 77–93; it reads TTPPSTKVTTPPSTNTP. Residues 94-114 show a composition bias toward polar residues; that stretch reads QPMQSTKSDTPQSPTTKQVPT. Residues 180 to 278 form a sialyl Lewis X-binding region; sequence VDVFVVLEEN…VIKMKNGGKY (99 aa).

Belongs to the staphylococcal/streptococcal toxin family.

The protein resides in the secreted. In terms of biological role, secreted protein that plays a role in immune innate response inhibition by interfering with host TLR2-mediated pathway. The sequence is that of Staphylococcal superantigen-like 4 from Staphylococcus aureus (strain Newman).